A 502-amino-acid chain; its full sequence is MNMSCKFEIVLLVSWWLLLVLVFGVESSMFSEFDRLDFPKHFIFGASSCAYQVEGAAFEDGRTLSTFDIAAHSGHLPGNGDITSDEYHKYKEDVELMVETGLDAYRFSISWSRLIPNGRGPVNPKGLEYYNNLVNALLTKGTQPHVTLLHSDLPQALRDEYGGLFISPKFIDDFVAYADVCFREFGDRVLHWTTFNEANFLAFGDENTPASALYLSAHHLLLAHASATRLYRENYQASQRGFIGINVYAYDFIPETNTEVDVIAAKRARDFFIGWFVQPLMNGEYPLTMRKNGGPRLPKFTPNETELLTGSYDFIGLNYYTAKTVKDDPVMLTVEPRNYYTDQGLISSYLGNIDPYQGHPFFNTPWGLHDVLQQFKQVYGNPPVYIHENGEVGDHDADYDKLINDIPRVEYLQGHIRAVLDAVRNGSNVKGYFVWSFLDMYELMYGTKFTFGLYYIDFNDPKLTRHPKLSQKWYSRFLKGEKASTKASIHTPNEAETHTYFY.

Residues 1–30 (MNMSCKFEIVLLVSWWLLLVLVFGVESSMF) form the signal peptide. Asn-2 carries N-linked (GlcNAc...) asparagine glycosylation. A beta-D-glucoside contacts are provided by residues Gln-52, His-150, and 196-197 (NE). Catalysis depends on Glu-197, which acts as the Proton donor. Asn-303 is a glycosylation site (N-linked (GlcNAc...) asparagine). Positions 320 and 388 each coordinate a beta-D-glucoside. Glu-388 acts as the Nucleophile in catalysis. A glycan (N-linked (GlcNAc...) asparagine) is linked at Asn-425. A beta-D-glucoside-binding residues include Trp-435 and Phe-451.

It belongs to the glycosyl hydrolase 1 family. Expressed in petals.

The protein resides in the vacuole. The enzyme catalyses cyanidin 3-O-beta-D-glucoside + 1-O-(trans-sinapoyl)-beta-D-glucose = cyanidin 3,5-di-O-beta-D-glucoside + (E)-sinapate. It functions in the pathway pigment biosynthesis; anthocyanin biosynthesis. Functionally, beta-glycosidase that catalyzes the transfer of glucose moiety to anthocyanidin 3-glucoside at the 5 position. Anthocyanins are ubiquitous colored pigments that are responsible for variations in petal color. Uses acyl-glucoses, but not UDP-glucose, as the glucose donor. This is Cyanidin 3-O-glucoside 5-O-glucosyltransferase (acyl-glucose) (AA5GT) from Dianthus caryophyllus (Carnation).